We begin with the raw amino-acid sequence, 96 residues long: HIG1 domain family member 1C (96 aa).

The Cytoplasmic segment spans residues 1 to 26; that stretch reads MSSDEWSAAEDEGQLSRLLRKSRDSP. Residues 1-91 form the HIG1 domain; it reads MSSDEWSAAE…YKDYIRPRFF (91 aa). The helical transmembrane segment at 27–44 threads the bilayer; it reads FVPVGMAGFVAVLSYGLY. At 45–58 the chain is on the extracellular side; that stretch reads KLNSRREQKMSLHL. Residues 59-81 traverse the membrane as a helical segment; that stretch reads IHVRVAAQGCVVGAVTLGVLYSM. Residues 82–96 lie on the Cytoplasmic side of the membrane; the sequence is YKDYIRPRFFNVPKK.

Its subcellular location is the membrane. The protein is HIG1 domain family member 1C (Higd1c) of Mus musculus (Mouse).